The sequence spans 167 residues: Photosystem I assembly protein Ycf3 (167 aa).

3 TPR repeats span residues 35 to 68 (AFAY…EVDA), 72 to 105 (SYIL…NPSL), and 120 to 153 (GEQA…APTS).

Belongs to the Ycf3 family.

The protein resides in the plastid. Its subcellular location is the chloroplast thylakoid membrane. Functionally, essential for the assembly of the photosystem I (PSI) complex. May act as a chaperone-like factor to guide the assembly of the PSI subunits. This Chlorokybus atmophyticus (Soil alga) protein is Photosystem I assembly protein Ycf3.